A 196-amino-acid polypeptide reads, in one-letter code: Kunitz trypsin inhibitor 5 (196 aa).

Residues 1–19 form the signal peptide; that stretch reads MSSLLYIFLLLAVFISHRG. Cysteines 156 and 167 form a disulfide.

This sequence belongs to the protease inhibitor I3 (leguminous Kunitz-type inhibitor) family.

It is found in the endoplasmic reticulum. In terms of biological role, can inhibit both serine proteases and cysteine proteases. May be involved in the modulation of the proteases that participate in the hydrolysis of dietary proteins in the gut of spider mites. The sequence is that of Kunitz trypsin inhibitor 5 from Arabidopsis thaliana (Mouse-ear cress).